We begin with the raw amino-acid sequence, 195 residues long: Imidazoleglycerol-phosphate dehydratase (195 aa).

This sequence belongs to the imidazoleglycerol-phosphate dehydratase family.

Its subcellular location is the cytoplasm. The enzyme catalyses D-erythro-1-(imidazol-4-yl)glycerol 3-phosphate = 3-(imidazol-4-yl)-2-oxopropyl phosphate + H2O. Its pathway is amino-acid biosynthesis; L-histidine biosynthesis; L-histidine from 5-phospho-alpha-D-ribose 1-diphosphate: step 6/9. The chain is Imidazoleglycerol-phosphate dehydratase from Burkholderia thailandensis (strain ATCC 700388 / DSM 13276 / CCUG 48851 / CIP 106301 / E264).